The primary structure comprises 189 residues: Putative ankyrin repeat protein TV1425 (189 aa).

4 ANK repeats span residues Tyr31 to Asp60, Glu64 to Thr93, Ser97 to Asp126, and Glu130 to Ala159.

This chain is Putative ankyrin repeat protein TV1425, found in Thermoplasma volcanium (strain ATCC 51530 / DSM 4299 / JCM 9571 / NBRC 15438 / GSS1).